A 537-amino-acid chain; its full sequence is Synaptotagmin-C (537 aa).

Residues 1 to 52 (MSGDGEDELCRNALALVNELCFSVRGNHNNEKCIEFSYLLRDRDRTRHIETD) are Vesicular-facing. Residues 53–78 (ISVSLLSVIVTFCGIVLLGVSLFVSW) form a helical membrane-spanning segment. Topologically, residues 79-537 (KLCWIPWRDK…TIVVESPHSV (459 aa)) are cytoplasmic. Disordered stretches follow at residues 92 to 111 (PQRR…HHSH) and 142 to 200 (IKLS…EFGT). Residues 100 to 110 (HPHQHLHHHHS) show a composition bias toward basic residues. The span at 143-174 (KLSQTSPDIPVDTSSGSKENNIPNAHSQQQVS) shows a compositional bias: polar residues. The interval 228–477 (EAKKHQKVNC…VIGMCRVGNA (250 aa)) is phospholipid binding. 2 consecutive C2 domains span residues 236 to 357 (NCGR…TIWR) and 368 to 501 (DLGE…EQWH). Positions 267, 273, 325, 326, 327, 330, 333, 399, 405, 459, and 461 each coordinate Ca(2+).

The protein belongs to the synaptotagmin family. Homodimer or homotrimer (possible). It depends on Ca(2+) as a cofactor.

Its subcellular location is the cytoplasmic vesicle. It is found in the secretory vesicle. It localises to the synaptic vesicle membrane. The protein localises to the synapse. May have a regulatory role in the membrane interactions during trafficking of synaptic vesicles at the active zone of the synapse. It binds acidic phospholipids with a specificity that requires the presence of both an acidic head group and a diacyl backbone. This chain is Synaptotagmin-C (P65-C), found in Diplobatis ommata (Ocellated electric ray).